Consider the following 311-residue polypeptide: Aspartate carbamoyltransferase catalytic subunit (311 aa).

Carbamoyl phosphate is bound by residues arginine 59 and threonine 60. Position 87 (lysine 87) interacts with L-aspartate. Arginine 109, histidine 139, and glutamine 142 together coordinate carbamoyl phosphate. L-aspartate contacts are provided by arginine 172 and arginine 224. Carbamoyl phosphate-binding residues include alanine 265 and proline 266.

It belongs to the aspartate/ornithine carbamoyltransferase superfamily. ATCase family. As to quaternary structure, heterododecamer (2C3:3R2) of six catalytic PyrB chains organized as two trimers (C3), and six regulatory PyrI chains organized as three dimers (R2).

The catalysed reaction is carbamoyl phosphate + L-aspartate = N-carbamoyl-L-aspartate + phosphate + H(+). It participates in pyrimidine metabolism; UMP biosynthesis via de novo pathway; (S)-dihydroorotate from bicarbonate: step 2/3. Functionally, catalyzes the condensation of carbamoyl phosphate and aspartate to form carbamoyl aspartate and inorganic phosphate, the committed step in the de novo pyrimidine nucleotide biosynthesis pathway. The sequence is that of Aspartate carbamoyltransferase catalytic subunit from Streptococcus pyogenes serotype M18 (strain MGAS8232).